The primary structure comprises 52 residues: UPF0181 protein NTHI1697 (52 aa).

The protein belongs to the UPF0181 family.

The protein is UPF0181 protein NTHI1697 of Haemophilus influenzae (strain 86-028NP).